Here is a 227-residue protein sequence, read N- to C-terminus: tRNA (guanine-N(1)-)-methyltransferase (227 aa).

Residues glycine 110 and 129-134 (IGDYVL) each bind S-adenosyl-L-methionine.

The protein belongs to the RNA methyltransferase TrmD family. Homodimer.

It localises to the cytoplasm. It carries out the reaction guanosine(37) in tRNA + S-adenosyl-L-methionine = N(1)-methylguanosine(37) in tRNA + S-adenosyl-L-homocysteine + H(+). Functionally, specifically methylates guanosine-37 in various tRNAs. In Mycoplasmopsis agalactiae (strain NCTC 10123 / CIP 59.7 / PG2) (Mycoplasma agalactiae), this protein is tRNA (guanine-N(1)-)-methyltransferase.